Reading from the N-terminus, the 446-residue chain is Tubulin alpha-1B chain (446 aa).

Position 11 (Q11) interacts with GTP. A disordered region spans residues 34–55 (GRLMDDSPSKHDSGSTFFSETG). The span at 35–46 (RLMDDSPSKHDS) shows a compositional bias: basic and acidic residues. GTP contacts are provided by E69, S138, G142, T143, S177, N204, and N226. E69 serves as a coordination point for Mg(2+). Residue E252 is part of the active site.

Belongs to the tubulin family. In terms of assembly, dimer of alpha and beta chains. A typical microtubule is a hollow water-filled tube with an outer diameter of 25 nm and an inner diameter of 15 nM. Alpha-beta heterodimers associate head-to-tail to form protofilaments running lengthwise along the microtubule wall with the beta-tubulin subunit facing the microtubule plus end conferring a structural polarity. Microtubules usually have 13 protofilaments but different protofilament numbers can be found in some organisms and specialized cells. It depends on Mg(2+) as a cofactor.

It is found in the cytoplasm. The protein resides in the cytoskeleton. It carries out the reaction GTP + H2O = GDP + phosphate + H(+). Functionally, tubulin is the major constituent of microtubules, a cylinder consisting of laterally associated linear protofilaments composed of alpha- and beta-tubulin heterodimers. Microtubules grow by the addition of GTP-tubulin dimers to the microtubule end, where a stabilizing cap forms. Below the cap, tubulin dimers are in GDP-bound state, owing to GTPase activity of alpha-tubulin. In Schizophyllum commune (Split gill fungus), this protein is Tubulin alpha-1B chain (TUB-1B).